The sequence spans 150 residues: Regulatory protein RecX (150 aa).

Belongs to the RecX family.

The protein resides in the cytoplasm. Modulates RecA activity. The protein is Regulatory protein RecX of Acidithiobacillus ferrooxidans (strain ATCC 23270 / DSM 14882 / CIP 104768 / NCIMB 8455) (Ferrobacillus ferrooxidans (strain ATCC 23270)).